The following is a 702-amino-acid chain: Soluble guanylate cyclase gcy-31 (702 aa).

A heme-binding site is contributed by H104. Residues 368 to 406 (TQQSAELKLLLHQEAQKSRNMRENMNRLKKERRRTDKLL) adopt a coiled-coil conformation. The Guanylate cyclase domain maps to 435–564 (TILFTDIVEF…ETVYVANKME (130 aa)). Residues D440 and D484 each coordinate Mg(2+). A disordered region spans residues 614 to 702 (RHGPHRVPSP…QDLTPRKSIT (89 aa)). Acidic residues predominate over residues 633–643 (SQTEDDDDDEL). Positions 683 to 695 (RNSNKTPRQSQDL) are enriched in polar residues.

This sequence belongs to the adenylyl cyclase class-4/guanylyl cyclase family. Heterodimer; with other soluble guanylate cyclases. Heme serves as cofactor. As to expression, expressed in a pair of bilaterally symmetric neurons in the head.

The protein resides in the cytoplasm. The enzyme catalyses GTP = 3',5'-cyclic GMP + diphosphate. May be regulated by molecular oxygen. Probably not activated by nitric oxide (NO). Synthesizes cyclic GMP (cGMP) from GTP. May play a role in embryogenesis. The sequence is that of Soluble guanylate cyclase gcy-31 (gcy-31) from Caenorhabditis elegans.